Reading from the N-terminus, the 1153-residue chain is uncharacterized protein (1153 aa).

The signal sequence occupies residues 1 to 18 (MNKNIFITLLISLLLLSG). Residue C19 is the site of N-palmitoyl cysteine attachment. C19 is lipidated: S-diacylglycerol cysteine. 4 helical membrane passes run 289-309 (VSAI…IGNI), 393-413 (LGFI…FLIF), 422-442 (ALIT…FMLF), and 457-477 (ISYA…SMII).

The protein belongs to the TrbL/VirB6 family.

Its subcellular location is the cell membrane. This is an uncharacterized protein from Rickettsia conorii (strain ATCC VR-613 / Malish 7).